A 208-amino-acid chain; its full sequence is ATP-dependent Clp protease proteolytic subunit (208 aa).

Residue Ser112 is the Nucleophile of the active site. His137 is an active-site residue.

The protein belongs to the peptidase S14 family. As to quaternary structure, fourteen ClpP subunits assemble into 2 heptameric rings which stack back to back to give a disk-like structure with a central cavity, resembling the structure of eukaryotic proteasomes.

The protein localises to the cytoplasm. The catalysed reaction is Hydrolysis of proteins to small peptides in the presence of ATP and magnesium. alpha-casein is the usual test substrate. In the absence of ATP, only oligopeptides shorter than five residues are hydrolyzed (such as succinyl-Leu-Tyr-|-NHMec, and Leu-Tyr-Leu-|-Tyr-Trp, in which cleavage of the -Tyr-|-Leu- and -Tyr-|-Trp bonds also occurs).. Its function is as follows. Cleaves peptides in various proteins in a process that requires ATP hydrolysis. Has a chymotrypsin-like activity. Plays a major role in the degradation of misfolded proteins. The chain is ATP-dependent Clp protease proteolytic subunit from Buchnera aphidicola subsp. Acyrthosiphon pisum (strain APS) (Acyrthosiphon pisum symbiotic bacterium).